Here is a 199-residue protein sequence, read N- to C-terminus: MSANEFYSSGQQGQYNQQNNQERTGAPNNGQYGADNGNPNGERGLFSTIVGGSAGAYAGSKVSNNHSKLSGVLGAIGGAFLANKISDERKEHKQQEQYGNSNFGGAPQGGHNNHHRQDNNNNNGGFGGPGGPGGQGFGRQGPQGFGGPGPQEFGGPGGQGFGGPNPQEFGGPGGQGFGGPNPQEFGGQGRQGFNGGSRW.

The disordered stretch occupies residues 1 to 48 (MSANEFYSSGQQGQYNQQNNQERTGAPNNGQYGADNGNPNGERGLFST). The residue at position 2 (Ser2) is an N-acetylserine. Residues 7-21 (YSSGQQGQYNQQNNQ) show a composition bias toward low complexity. Over residues 22-31 (ERTGAPNNGQ) the composition is skewed to polar residues. A phosphoserine mark is found at Ser53 and Ser70. The interval 89-199 (RKEHKQQEQY…RQGFNGGSRW (111 aa)) is disordered. Composition is skewed to gly residues over residues 124–163 (GGFG…GFGG), 170–179 (GGPGGQGFGG), and 186–199 (GGQG…GSRW).

It is found in the mitochondrion. This is an uncharacterized protein from Saccharomyces cerevisiae (strain ATCC 204508 / S288c) (Baker's yeast).